Reading from the N-terminus, the 539-residue chain is MAVCARLCGVGPSRGCRRRQQRRGPAETAAADSEPDTDPEEERIEASAGVGGGLCAGPSPPPPRCSLLELPPELLVEIFASLPGTDLPSLAQVCTKFRRILHTDTIWRRRCREEYGVCENLRKLEITGVSCRDVYAKLLHRYRHILGLWQPDIGPYGGLLNVVVDGLFIIGWMYLPPHDPHVDDPMRFKPLFRIHLMERKAATVECMYGHKGPHHGHIQIVKKDEFSTKCNQTDHHRMSGGRQEEFRTWLREEWGRTLEDIFHEHMQELILMKFIYTSQYDNCLTYRRIYLPPSRPDDLIKPGLFKGTYGSHGLEIVMLSFHGRRARGTKITGDPNIPAGQQTVEIDLRHRIQLPDLENQRNFNELSRIVLEVRERVRQEQQEGGHEAGEGRGRQGPRESQPSPAQPRAEAPSKGPDGTPGEDGGEPGDAVAAAEQPAQCGQGQPFVLPVGVSSRNEDYPRTCRMCFYGTGLIAGHGFTSPERTPGVFILFDEDRFGFVWLELKSFSLYSRVQATFRNADAPSPQAFDEMLKNIQSLTS.

The segment at 11 to 53 (GPSRGCRRRQQRRGPAETAAADSEPDTDPEEERIEASAGVGGG) is disordered. S33 bears the Phosphoserine mark. Phosphoserine; by PKB/AKT1 is present on S33. The span at 33 to 43 (SEPDTDPEEER) shows a compositional bias: acidic residues. T37 is modified (phosphothreonine). The D box motif lies at 64–69 (RCSLLE). The 47-residue stretch at 64–110 (RCSLLELPPELLVEIFASLPGTDLPSLAQVCTKFRRILHTDTIWRRR) folds into the F-box domain. Positions 206, 214, 230, and 236 each coordinate Zn(2+). S278 is subject to Phosphoserine; by ATM. The DDL motif motif lies at 297–299 (DDL). Basic and acidic residues predominate over residues 377–397 (VRQEQQEGGHEAGEGRGRQGP). The segment at 377–446 (VRQEQQEGGH…PAQCGQGQPF (70 aa)) is disordered. T419 carries the post-translational modification Phosphothreonine; by MTOR. S480 is subject to Phosphoserine.

The protein belongs to the FBXO31 family. Part of a SCF (SKP1-cullin-F-box) protein ligase complex SCF(FBXO31) composed of CUL1, SKP1, RBX1 and FBXO31. Interacts (when phosphorylated at Ser-33) with CDC20, promoting ubiquitination by the APC/C complex. In terms of processing, phosphorylation at Ser-278 by ATM following gamma-irradiation results in its stabilization. Phosphorylation at Thr-419 and Ser-480 in absence of stress promotes its ubiquitination and degradation by the SCF(FBXO46) complex. Phosphorylation at Ser-33 by AKT1 promotes association with CDC20 and ubiquitination by the APC/C complex. Ubiquitinated by the SCF(FBXO46) complex in absence of stress, promoting its degradation. Ubiquitinated by the APC/C complex following phosphorylation at Ser-33, leading to its degradation by the proteasome. In terms of tissue distribution, highly expressed in brain. Expressed at moderate levels in most tissues, except bone marrow.

Its subcellular location is the cytoplasm. It localises to the cytoskeleton. The protein localises to the microtubule organizing center. The protein resides in the centrosome. The protein operates within protein modification; protein ubiquitination. In terms of biological role, substrate-recognition component of the SCF(FBXO31) protein ligase complex, which specifically mediates the ubiquitination of proteins amidated at their C-terminus in response to oxidative stress, leading to their degradation by the proteasome. FBXO31 specifically recognizes and binds C-terminal peptides bearing an amide: C-terminal amidation in response to oxidative stress takes place following protein fragmentation. The SCF(FBXO31) also plays a role in G1 arrest following DNA damage by mediating ubiquitination of phosphorylated cyclin-D1 (CCND1), promoting its degradation by the proteasome, resulting in G1 arrest. The SCF(FBXO31) complex is however not a major regulator of CCND1 stability during the G1/S transition. In response to genotoxic stress, the SCF(FBXO31) complex directs ubiquitination and degradation of phosphorylated MDM2, thereby promoting p53/TP53-mediated DNA damage response. SCF(FBXO31) complex is required for genomic integrity by catalyzing ubiquitination and degradation of cyclin-A (CCNA1 and/or CCNA2) during the G1 phase. In response to genotoxic stress, the SCF(FBXO31) complex directs ubiquitination and degradation of phosphorylated FBXO46 and MAP2K6. SCF(FBXO31) complex promotes ubiquitination and degradation of CDT1 during the G2 phase to prevent re-replication. The SCF(FBXO31) complex also mediates ubiquitination and degradation of DUSP6, OGT and PARD6A. This is F-box only protein 31 from Homo sapiens (Human).